A 351-amino-acid chain; its full sequence is Glycerol-1-phosphate dehydrogenase [NAD(P)+] (351 aa).

NAD(+) is bound by residues 97-101 (GKVID) and 119-122 (TSPS). Aspartate 124 lines the substrate pocket. Residue serine 128 coordinates NAD(+). Aspartate 171 serves as a coordination point for substrate. Positions 171 and 251 each coordinate Zn(2+). Histidine 255 serves as a coordination point for substrate. Histidine 267 contacts Zn(2+).

The protein belongs to the glycerol-1-phosphate dehydrogenase family. As to quaternary structure, homodimer. It depends on Zn(2+) as a cofactor.

It is found in the cytoplasm. The enzyme catalyses sn-glycerol 1-phosphate + NAD(+) = dihydroxyacetone phosphate + NADH + H(+). It catalyses the reaction sn-glycerol 1-phosphate + NADP(+) = dihydroxyacetone phosphate + NADPH + H(+). It participates in membrane lipid metabolism; glycerophospholipid metabolism. Catalyzes the NAD(P)H-dependent reduction of dihydroxyacetonephosphate (DHAP or glycerone phosphate) to glycerol 1-phosphate (G1P). The G1P thus generated is used as the glycerophosphate backbone of phospholipids in the cellular membranes of Archaea. In Saccharolobus islandicus (strain L.S.2.15 / Lassen #1) (Sulfolobus islandicus), this protein is Glycerol-1-phosphate dehydrogenase [NAD(P)+].